The following is a 387-amino-acid chain: Putative glutamate--cysteine ligase 2 (387 aa).

This sequence belongs to the glutamate--cysteine ligase type 2 family. YbdK subfamily.

It catalyses the reaction L-cysteine + L-glutamate + ATP = gamma-L-glutamyl-L-cysteine + ADP + phosphate + H(+). Functionally, ATP-dependent carboxylate-amine ligase which exhibits weak glutamate--cysteine ligase activity. In Trichormus variabilis (strain ATCC 29413 / PCC 7937) (Anabaena variabilis), this protein is Putative glutamate--cysteine ligase 2.